The primary structure comprises 245 residues: 1-(5-phosphoribosyl)-5-[(5-phosphoribosylamino)methylideneamino] imidazole-4-carboxamide isomerase (245 aa).

Catalysis depends on aspartate 8, which acts as the Proton acceptor. Catalysis depends on aspartate 130, which acts as the Proton donor.

This sequence belongs to the HisA/HisF family.

The protein localises to the cytoplasm. It catalyses the reaction 1-(5-phospho-beta-D-ribosyl)-5-[(5-phospho-beta-D-ribosylamino)methylideneamino]imidazole-4-carboxamide = 5-[(5-phospho-1-deoxy-D-ribulos-1-ylimino)methylamino]-1-(5-phospho-beta-D-ribosyl)imidazole-4-carboxamide. The protein operates within amino-acid biosynthesis; L-histidine biosynthesis; L-histidine from 5-phospho-alpha-D-ribose 1-diphosphate: step 4/9. The chain is 1-(5-phosphoribosyl)-5-[(5-phosphoribosylamino)methylideneamino] imidazole-4-carboxamide isomerase from Pseudomonas putida (strain ATCC 47054 / DSM 6125 / CFBP 8728 / NCIMB 11950 / KT2440).